An 846-amino-acid chain; its full sequence is uncharacterized protein (846 aa).

WD repeat units follow at residues 88–129 (TKHI…LLYD), 132–172 (EHSR…STIT), 175–215 (GNSE…LPFL), 219–258 (AHNG…KKSL), 262–309 (NNVS…IPYR), and 313–348 (CHDS…NAFN). The tract at residues 541–560 (PREASTPSESSNSSIESEDN) is disordered. Residues 544–555 (ASTPSESSNSSI) are compositionally biased toward low complexity. The stretch at 624-663 (FHRSSVTSASIKSREAVLSAGNSSRRASIFLDQLSLHGDT) is one WD 7 repeat.

This is an uncharacterized protein from Schizosaccharomyces pombe (strain 972 / ATCC 24843) (Fission yeast).